The sequence spans 302 residues: Dioxygenase ALT11 (302 aa).

Residues 1-22 (MSSPELPSQMGVPNGHTKLQEV) form a disordered region. The Fe cation site is built by His-147, Asp-149, and His-223.

The protein belongs to the PhyH family. In terms of assembly, homodimer. Fe cation is required as a cofactor.

It participates in mycotoxin biosynthesis. Functionally, dioxygenase; part of the gene cluster that mediates the biosynthesis of the host-selective toxins (HSTs) AAL-toxins, sphinganine-analog mycotoxins responsible for Alternaria stem canker on tomato by the tomato pathotype. The biosynthesis starts with the polyketide synthase ALT1-catalyzed C-16 carbon chain assembly from one starter acetyl-CoA unit with malonyl-CoA extender units. ALT1 also selectively transfers methyl groups at the first and the third cycle of chain elongation for AAL toxin. The C-16 polyketide chain is released from the enzyme by a nucleophilic attack of a carbanion, which is derived from R-carbon of glycin by decarboxylation, on the carbonyl carbon of polyketide acyl chain. This step is probably catalyzed by a pyridoxal 5'-phosphate-dependent aminoacyl transferase ALT4. The respective functions of the other enzymes encoded by the cluster have still to be elucidated. The sphingosine N-acyltransferase-like protein ALT7 seems not to act as a resistance/self-tolerance factor against the toxin in the toxin biosynthetic gene cluster, contrary to what is expected. The protein is Dioxygenase ALT11 of Alternaria alternata (Alternaria rot fungus).